We begin with the raw amino-acid sequence, 312 residues long: Acetyl-coenzyme A carboxylase carboxyl transferase subunit alpha (312 aa).

The CoA carboxyltransferase C-terminal domain occupies 25–286 (GDDSAVEILK…GNYIIEKLNE (262 aa)).

It belongs to the AccA family. As to quaternary structure, acetyl-CoA carboxylase is a heterohexamer composed of biotin carboxyl carrier protein (AccB), biotin carboxylase (AccC) and two subunits each of ACCase subunit alpha (AccA) and ACCase subunit beta (AccD).

The protein localises to the cytoplasm. The catalysed reaction is N(6)-carboxybiotinyl-L-lysyl-[protein] + acetyl-CoA = N(6)-biotinyl-L-lysyl-[protein] + malonyl-CoA. Its pathway is lipid metabolism; malonyl-CoA biosynthesis; malonyl-CoA from acetyl-CoA: step 1/1. Functionally, component of the acetyl coenzyme A carboxylase (ACC) complex. First, biotin carboxylase catalyzes the carboxylation of biotin on its carrier protein (BCCP) and then the CO(2) group is transferred by the carboxyltransferase to acetyl-CoA to form malonyl-CoA. The polypeptide is Acetyl-coenzyme A carboxylase carboxyl transferase subunit alpha (Campylobacter hominis (strain ATCC BAA-381 / DSM 21671 / CCUG 45161 / LMG 19568 / NCTC 13146 / CH001A)).